The sequence spans 356 residues: S-adenosylmethionine:tRNA ribosyltransferase-isomerase (356 aa).

This sequence belongs to the QueA family. In terms of assembly, monomer.

The protein resides in the cytoplasm. The enzyme catalyses 7-aminomethyl-7-carbaguanosine(34) in tRNA + S-adenosyl-L-methionine = epoxyqueuosine(34) in tRNA + adenine + L-methionine + 2 H(+). It functions in the pathway tRNA modification; tRNA-queuosine biosynthesis. Functionally, transfers and isomerizes the ribose moiety from AdoMet to the 7-aminomethyl group of 7-deazaguanine (preQ1-tRNA) to give epoxyqueuosine (oQ-tRNA). This Escherichia coli (strain UTI89 / UPEC) protein is S-adenosylmethionine:tRNA ribosyltransferase-isomerase.